A 399-amino-acid chain; its full sequence is Probable peptidoglycan glycosyltransferase FtsW (399 aa).

At 1-32 (MMAGFAQTTITKINQFYERWMPRLPAEMTARN) the chain is on the cytoplasmic side. The helical transmembrane segment at 33–53 (VLVFCVVCLLCIGSVMVASAS) threads the bilayer. The Periplasmic segment spans residues 54-72 (MPYAEYMHENPFHYVVRHA). Residues 73 to 93 (ISIATAAIVAYLVYKVPLNVW) form a helical membrane-spanning segment. Over 94-97 (FKNT) the chain is Cytoplasmic. Residues 98–118 (FSFWLITILLLLAVLVIGTEV) traverse the membrane as a helical segment. The Periplasmic portion of the chain corresponds to 119–126 (NGSRRWIR). The helical transmembrane segment at 127–147 (LAGFTLQPTEVAKVMMAIFTA) threads the bilayer. At 148–159 (DYVVRRAKEVRT) the chain is on the cytoplasmic side. Residues 160–180 (HWKGLVRLSGVMAITVGLIIA) form a helical membrane-spanning segment. At 181 to 183 (EPD) the chain is on the periplasmic side. Residues 184–204 (LGATVVIVLMMVGIFFLAGAP) traverse the membrane as a helical segment. Residues 205–207 (PTQ) are Cytoplasmic-facing. The chain crosses the membrane as a helical span at residues 208–228 (FAIMLGAVVMGIGFLILFEPY). Topologically, residues 229-292 (RLARAMSFTN…DFMLAVLGEE (64 aa)) are periplasmic. The helical transmembrane segment at 293–313 (FGFVGISIVIGLSFIMLACCI) threads the bilayer. At 314–327 (KIGHRALKHNFLRA) the chain is on the cytoplasmic side. Residues 328–348 (GYLAYGISIIFLLQIIVNAGM) form a helical membrane-spanning segment. At 349–359 (NMGLMPTKGLT) the chain is on the periplasmic side. A helical transmembrane segment spans residues 360-380 (LPFISYGGTSLMMCAAMISLI). At 381 to 399 (LRIDASTQEINPDREESNF) the chain is on the cytoplasmic side.

It belongs to the SEDS family. FtsW subfamily.

It localises to the cell inner membrane. The catalysed reaction is [GlcNAc-(1-&gt;4)-Mur2Ac(oyl-L-Ala-gamma-D-Glu-L-Lys-D-Ala-D-Ala)](n)-di-trans,octa-cis-undecaprenyl diphosphate + beta-D-GlcNAc-(1-&gt;4)-Mur2Ac(oyl-L-Ala-gamma-D-Glu-L-Lys-D-Ala-D-Ala)-di-trans,octa-cis-undecaprenyl diphosphate = [GlcNAc-(1-&gt;4)-Mur2Ac(oyl-L-Ala-gamma-D-Glu-L-Lys-D-Ala-D-Ala)](n+1)-di-trans,octa-cis-undecaprenyl diphosphate + di-trans,octa-cis-undecaprenyl diphosphate + H(+). The protein operates within cell wall biogenesis; peptidoglycan biosynthesis. In terms of biological role, peptidoglycan polymerase that is essential for cell division. The sequence is that of Probable peptidoglycan glycosyltransferase FtsW from Acinetobacter baylyi (strain ATCC 33305 / BD413 / ADP1).